Here is a 357-residue protein sequence, read N- to C-terminus: Dual-specificity RNA methyltransferase RlmN (357 aa).

The Proton acceptor role is filled by E89. The region spanning 109-340 (EGEKYTVCVS…CTIRESKALD (232 aa)) is the Radical SAM core domain. An intrachain disulfide couples C116 to C345. Residues C123, C127, and C130 each contribute to the [4Fe-4S] cluster site. Residues 173-174 (GE), S203, 226-228 (SLH), and N302 each bind S-adenosyl-L-methionine. The active-site S-methylcysteine intermediate is C345.

Belongs to the radical SAM superfamily. RlmN family. Requires [4Fe-4S] cluster as cofactor.

The protein localises to the cytoplasm. The catalysed reaction is adenosine(2503) in 23S rRNA + 2 reduced [2Fe-2S]-[ferredoxin] + 2 S-adenosyl-L-methionine = 2-methyladenosine(2503) in 23S rRNA + 5'-deoxyadenosine + L-methionine + 2 oxidized [2Fe-2S]-[ferredoxin] + S-adenosyl-L-homocysteine. The enzyme catalyses adenosine(37) in tRNA + 2 reduced [2Fe-2S]-[ferredoxin] + 2 S-adenosyl-L-methionine = 2-methyladenosine(37) in tRNA + 5'-deoxyadenosine + L-methionine + 2 oxidized [2Fe-2S]-[ferredoxin] + S-adenosyl-L-homocysteine. Its function is as follows. Specifically methylates position 2 of adenine 2503 in 23S rRNA and position 2 of adenine 37 in tRNAs. m2A2503 modification seems to play a crucial role in the proofreading step occurring at the peptidyl transferase center and thus would serve to optimize ribosomal fidelity. This chain is Dual-specificity RNA methyltransferase RlmN, found in Helicobacter pylori (strain P12).